Consider the following 163-residue polypeptide: Probable chemoreceptor glutamine deamidase CheD (163 aa).

This sequence belongs to the CheD family.

The catalysed reaction is L-glutaminyl-[protein] + H2O = L-glutamyl-[protein] + NH4(+). Its function is as follows. Probably deamidates glutamine residues to glutamate on methyl-accepting chemotaxis receptors (MCPs), playing an important role in chemotaxis. The polypeptide is Probable chemoreceptor glutamine deamidase CheD (Borrelia garinii subsp. bavariensis (strain ATCC BAA-2496 / DSM 23469 / PBi) (Borreliella bavariensis)).